A 530-amino-acid chain; its full sequence is MINYKNLNELENFKILEGIAPEVLKTALTGKRIKEYDITIEGDSVHYNYASKQINENHLKIFQNLSDEANLIEKYKEVLNGEKINISENRKVLHHLTRGQIGKDVIEDNKENMREFFQSELEKIYNFAKQVHSGNIKSVNGKKFKNVVQIGIGGSSLGPKALYSSIKNYAKKHNLALMNGYFISNIDPDESEEVLNSINLDETLFIIVSKSGNTLETTANMQFLINKLKSNGIKEYKKQMTIITLKNSMLALEETGCLEYFFMHDSIGGRFSPTSAVGLALLTLCFTEKIVKEIIKGANKTDKKSLNKKVKDNAPLLAALISIYERNVLNYSSNCIIAYSKAMENFYLHLQQLEMESNGKSVNRFNETINYKTVRIIWGGVGTDVQHSFFQMLHQGTDIVPMDFIGFNATQLKEDVISDNSSSNDKLKANLIAQIIAFSKGKENSNKNKNFKGERPSALIYSKELTPYAIGAILSHYENKVMFEGFLLNINSFDQEGVQLGKILANQILKNNAFEDEVIESYSKKILKQD.

The active-site Proton donor is Glu-356. Catalysis depends on residues His-387 and Lys-502.

The protein belongs to the GPI family.

It localises to the cytoplasm. The catalysed reaction is alpha-D-glucose 6-phosphate = beta-D-fructose 6-phosphate. Its pathway is carbohydrate biosynthesis; gluconeogenesis. It participates in carbohydrate degradation; glycolysis; D-glyceraldehyde 3-phosphate and glycerone phosphate from D-glucose: step 2/4. Catalyzes the reversible isomerization of glucose-6-phosphate to fructose-6-phosphate. The sequence is that of Glucose-6-phosphate isomerase from Borrelia garinii subsp. bavariensis (strain ATCC BAA-2496 / DSM 23469 / PBi) (Borreliella bavariensis).